The primary structure comprises 81 residues: Photosystem I iron-sulfur center (81 aa).

4Fe-4S ferredoxin-type domains follow at residues 2-31 and 39-68; these read AHSV…MIPW and IASA…VRVY. Residues Cys-11, Cys-14, Cys-17, Cys-21, Cys-48, Cys-51, Cys-54, and Cys-58 each coordinate [4Fe-4S] cluster.

As to quaternary structure, the eukaryotic PSI reaction center is composed of at least 11 subunits. Requires [4Fe-4S] cluster as cofactor.

Its subcellular location is the plastid. The protein resides in the chloroplast thylakoid membrane. It carries out the reaction reduced [plastocyanin] + hnu + oxidized [2Fe-2S]-[ferredoxin] = oxidized [plastocyanin] + reduced [2Fe-2S]-[ferredoxin]. Functionally, apoprotein for the two 4Fe-4S centers FA and FB of photosystem I (PSI); essential for photochemical activity. FB is the terminal electron acceptor of PSI, donating electrons to ferredoxin. The C-terminus interacts with PsaA/B/D and helps assemble the protein into the PSI complex. Required for binding of PsaD and PsaE to PSI. PSI is a plastocyanin-ferredoxin oxidoreductase, converting photonic excitation into a charge separation, which transfers an electron from the donor P700 chlorophyll pair to the spectroscopically characterized acceptors A0, A1, FX, FA and FB in turn. The sequence is that of Photosystem I iron-sulfur center from Cycas taitungensis (Prince sago).